The primary structure comprises 391 residues: DNA-directed RNA polymerase subunit Rpo1C (391 aa).

This sequence belongs to the RNA polymerase beta' chain family. As to quaternary structure, part of the RNA polymerase complex.

It is found in the cytoplasm. The protein localises to the chromosome. The enzyme catalyses RNA(n) + a ribonucleoside 5'-triphosphate = RNA(n+1) + diphosphate. In terms of biological role, DNA-dependent RNA polymerase (RNAP) catalyzes the transcription of DNA into RNA using the four ribonucleoside triphosphates as substrates. Forms part of the jaw domain. This chain is DNA-directed RNA polymerase subunit Rpo1C, found in Thermococcus kodakarensis (strain ATCC BAA-918 / JCM 12380 / KOD1) (Pyrococcus kodakaraensis (strain KOD1)).